Here is a 511-residue protein sequence, read N- to C-terminus: Glycoprotein (511 aa).

An N-terminal signal peptide occupies residues 1 to 16; it reads MKCLLYLAFLFIGVNC. The Virion surface portion of the chain corresponds to 17–467; sequence KFTIVFPHNQ…FSSWKSSIAS (451 aa). Residues 18–35 are trimerization; sequence FTIVFPHNQKGNWKNVPS. Cystine bridges form between cysteine 40–cysteine 300, cysteine 75–cysteine 108, cysteine 84–cysteine 130, cysteine 169–cysteine 174, cysteine 193–cysteine 240, and cysteine 235–cysteine 269. The fusion peptide stretch occupies residues 53–172; the sequence is IGTALQVKMP…QFINGKCSND (120 aa). Asparagine 179 carries N-linked (GlcNAc...) asparagine; by host glycosylation. The tract at residues 259–309 is trimerization; it reads DLFAAARFPECPEGSSISAPSQTSVDVSLIQDVERILDYSLCQETWSKIRA. Asparagine 336 carries N-linked (GlcNAc...) asparagine; by host glycosylation. The tract at residues 383–405 is trimerization; it reads EIGPNGVLRTSLGYKFPLYMIGH. The chain crosses the membrane as a helical span at residues 468–488; sequence FFFIIGLIIGLFLVLRVGIYL. A lipid anchor (S-palmitoyl cysteine; by host) is attached at cysteine 489. Over 489–511 the chain is Intravirion; that stretch reads CIKLKHTKKRQIYTDIEMNRLGK. The basolateral targeting ex vivo motif lies at 496–506; that stretch reads KKRQIYTDIEM.

This sequence belongs to the vesiculovirus glycoprotein family. As to quaternary structure, homotrimer. Interacts with host LDL at target cell surface. In terms of processing, glycosylated by host. Palmitoylated by host.

It is found in the virion membrane. The protein resides in the host membrane. Functionally, attaches the virus to host LDL receptors, inducing clathrin-dependent endocytosis of the virion. In the endosome, the acidic pH induces conformational changes in the glycoprotein trimer, which trigger fusion between virus and endosomal membrane. This chain is Glycoprotein (G), found in Vesicular stomatitis Indiana virus (strain Orsay) (VSIV).